The following is a 210-amino-acid chain: SAP domain-containing ribonucleoprotein (210 aa).

A2 bears the N-acetylalanine mark. The SAP domain occupies 8 to 42; it reads LHKLKLAELKQECLARGLETKGIKQDLIHRLQAYL. Residue K10 is modified to N6-acetyllysine. A compositionally biased stretch (acidic residues) spans 45-64; the sequence is HAEEEANEEDVLGDETEEEE. The interval 45-86 is disordered; that stretch reads HAEEEANEEDVLGDETEEEETKPIELPVKEEEPPEKTVDVAA. Residues 65-86 are compositionally biased toward basic and acidic residues; that stretch reads TKPIELPVKEEEPPEKTVDVAA. At K142 the chain carries N6-acetyllysine. The tract at residues 161–210 is disordered; that stretch reads VSSISRKSEDDEKLKKRKERFGIVTSSAGTGTTEDTEAKKRKRAERFGIA. S163 is modified (phosphoserine). Residues 184–193 show a composition bias toward polar residues; the sequence is VTSSAGTGTT.

The protein belongs to the SAP domain-containing ribonucleoprotein family. As to quaternary structure, interacts with DDX39A. Interacts with FUS. Interacts (via the C-terminal domain) with DDX39B; the interaction is direct and facilitates RNA binding of DDX39B. Component of the transcription/export (TREX) complex at least composed of ALYREF/THOC4, DDX39B, SARNP/CIP29, CHTOP and the THO subcomplex; TREX seems to have dynamic structure involving ATP-dependent remodeling; in the complex interacts directly with DDX39B in a ATP-dependent manner which bridges it to ALYREF/THOC4. In terms of tissue distribution, low expression in spleen, liver, pancreas, testis, thymus, heart, and kidney. Increased levels are seen in hepatocellular carcinoma and pancreatic adenocarcinoma.

It is found in the nucleus. It localises to the nucleus speckle. Its function is as follows. Binds both single-stranded and double-stranded DNA with higher affinity for the single-stranded form. Specifically binds to scaffold/matrix attachment region DNA. Also binds single-stranded RNA. Enhances RNA unwinding activity of DDX39A. May participate in important transcriptional or translational control of cell growth, metabolism and carcinogenesis. Component of the TREX complex which is thought to couple mRNA transcription, processing and nuclear export, and specifically associates with spliced mRNA and not with unspliced pre-mRNA. The TREX complex is recruited to spliced mRNAs by a transcription-independent mechanism, binds to mRNA upstream of the exon-junction complex (EJC) and is recruited in a splicing- and cap-dependent manner to a region near the 5' end of the mRNA where it functions in mRNA export to the cytoplasm via the TAP/NXF1 pathway. Associates with DDX39B, which facilitates RNA binding of DDX39B and likely plays a role in mRNA export. This chain is SAP domain-containing ribonucleoprotein (SARNP), found in Homo sapiens (Human).